The sequence spans 228 residues: UPF0758 protein stu1465 (228 aa).

The MPN domain occupies 103–225 (QIMSSQQVAR…YYSFREERED (123 aa)). Residues histidine 174, histidine 176, and aspartate 187 each contribute to the Zn(2+) site. The JAMM motif motif lies at 174–187 (HNHPSGEAYPSRND).

Belongs to the UPF0758 family.

The polypeptide is UPF0758 protein stu1465 (Streptococcus thermophilus (strain ATCC BAA-250 / LMG 18311)).